A 100-amino-acid chain; its full sequence is Enhancer of yellow 2 transcription factor (100 aa).

This sequence belongs to the ENY2 family. In terms of assembly, component of the nuclear pore complex (NPC)-associated AMEX complex (anchoring and mRNA export complex), composed of at least e(y)2 and xmas-2. Component of the SAGA transcription coactivator-HAT complexes, at least composed of Ada2b, e(y)2, Pcaf/Gcn5, Taf10 and Nipped-A/Trrap. Within the SAGA complex, e(y)2, Sgf11, and not/nonstop form an additional subcomplex of SAGA called the DUB module (deubiquitination module). Component of the THO complex, composed of at least e(y)2, HPR1, THO2, THOC5, THOC6 and THOC7. Interacts with e(y)1. Interacts with su(Hw) (via zinc fingers). Interacts with xmas-2; required for localization to the nuclear periphery. Interacts with the nuclear pore complex (NPC).

Its subcellular location is the nucleus. The protein resides in the nucleoplasm. It localises to the cytoplasm. In terms of biological role, involved in mRNA export coupled transcription activation by association with both the AMEX and the SAGA complexes. The SAGA complex is a multiprotein complex that activates transcription by remodeling chromatin and mediating histone acetylation and deubiquitination. Within the SAGA complex, participates in a subcomplex that specifically deubiquitinates histone H2B. The SAGA complex is recruited to specific gene promoters by activators, where it is required for transcription. Required for nuclear receptor-mediated transactivation. Involved in transcription elongation by recruiting the THO complex onto nascent mRNA. The AMEX complex functions in docking export-competent ribonucleoprotein particles (mRNPs) to the nuclear entrance of the nuclear pore complex (nuclear basket). AMEX participates in mRNA export and accurate chromatin positioning in the nucleus by tethering genes to the nuclear periphery. This Drosophila pseudoobscura pseudoobscura (Fruit fly) protein is Enhancer of yellow 2 transcription factor.